A 262-amino-acid polypeptide reads, in one-letter code: Nurim (262 aa).

Residues 1 to 4 are Nuclear-facing; the sequence is MAPA. A helical transmembrane segment spans residues 5-28; sequence LLLVPAALASFVLAFGTGVEFVRF. The Perinuclear space portion of the chain corresponds to 29 to 58; the sequence is TSLRPLLGGIPESGGPDARHGWLAALQDRS. Residues 59-80 form a helical membrane-spanning segment; that stretch reads ILASLAWDLCLLLLFVVQHSLM. At 81–97 the chain is on the nuclear side; the sequence is ATEAVKAWTSRYFGVLQ. The chain crosses the membrane as a helical span at residues 98–114; the sequence is RSLYVACTALALQLVMR. Topologically, residues 115-133 are perinuclear space; it reads YWEATPRGPVLWEARAEPW. The helical transmembrane segment at 134-164 threads the bilayer; sequence ATWVPLLCFVLHVVSWLLIFSILLVFDYAEL. At 165–191 the chain is on the nuclear side; the sequence is MGLKQVYYHVLGLGEPLSLKSPRALRL. A helical transmembrane segment spans residues 192-210; that stretch reads FSHLRHPVCVELLTVLWVV. The Perinuclear space portion of the chain corresponds to 211 to 216; that stretch reads PTLGTD. A helical membrane pass occupies residues 217–234; sequence RLLLALLFTLYLGLAHGL. The Nuclear portion of the chain corresponds to 235–262; it reads DQQDLRYLRSQLQRKLQLLSRPQDGEAE.

This sequence belongs to the nurim family.

It is found in the nucleus inner membrane. This chain is Nurim (Nrm), found in Rattus norvegicus (Rat).